Here is a 130-residue protein sequence, read N- to C-terminus: UPF0102 protein RPE_0358 (130 aa).

Belongs to the UPF0102 family.

The polypeptide is UPF0102 protein RPE_0358 (Rhodopseudomonas palustris (strain BisA53)).